Here is a 138-residue protein sequence, read N- to C-terminus: Translation initiation factor 5A (138 aa).

Residue K37 is modified to Hypusine.

Belongs to the eIF-5A family.

The protein resides in the cytoplasm. Its function is as follows. Functions by promoting the formation of the first peptide bond. The protein is Translation initiation factor 5A of Pyrococcus furiosus (strain ATCC 43587 / DSM 3638 / JCM 8422 / Vc1).